Reading from the N-terminus, the 278-residue chain is Odontogenic ameloblast-associated protein (278 aa).

The N-terminal stretch at 1–15 (MKIIILLGLIGATSS) is a signal peptide. A disordered region spans residues 103-124 (GGQAGQPDFSQQQTPSQTQQAS). The span at 107 to 124 (GQPDFSQQQTPSQTQQAS) shows a compositional bias: low complexity. Thr-116 and Thr-120 each carry an O-linked (GalNAc...) threonine glycan. The interaction with ARHGEF5 stretch occupies residues 126 to 128 (MSY). The tract at residues 230-278 (GFKQDNVGVSTPSTSPKPDTGNFFTSEINPTIAPLLPEQKVNADSLREP) is disordered. Polar residues predominate over residues 236-258 (VGVSTPSTSPKPDTGNFFTSEIN). Residues Thr-240, Thr-243, Thr-249, and Thr-254 are each glycosylated (O-linked (GalNAc...) threonine).

Belongs to the ODAM family. Interacts (via C-terminus) with ARHGEF5. Post-translationally, O-glycosylated. In terms of tissue distribution, highly expressed in tooth-associated epithelia. In tooth, it is only detected in the ameloblast layer of the enamel organ, starting at post-secretory transition and extending throughout the maturation stage. Also detected in epithelial cells of the gingiva which bind it to the tooth surface (junctional epithelium) (at protein level). Predominantly expressed in mandible, but also expressed at weak level in nasal and salivary glands, and at much lower level in epididymis.

It is found in the secreted. The protein resides in the cytoplasm. It localises to the nucleus. Functionally, tooth-associated epithelia protein that probably plays a role in odontogenesis, the complex process that results in the initiation and generation of the tooth. May be incorporated in the enamel matrix at the end of mineralization process. Involved in the induction of RHOA activity via interaction with ARHGEF and expression of downstream factors such as ROCK. Plays a role in attachment of the junctional epithelium to the tooth surface. In Rattus norvegicus (Rat), this protein is Odontogenic ameloblast-associated protein (Odam).